The following is a 339-amino-acid chain: Phenylalanine--tRNA ligase alpha subunit (339 aa).

E253 is a Mg(2+) binding site.

This sequence belongs to the class-II aminoacyl-tRNA synthetase family. Phe-tRNA synthetase alpha subunit type 1 subfamily. Tetramer of two alpha and two beta subunits. The cofactor is Mg(2+).

The protein resides in the cytoplasm. It carries out the reaction tRNA(Phe) + L-phenylalanine + ATP = L-phenylalanyl-tRNA(Phe) + AMP + diphosphate + H(+). This is Phenylalanine--tRNA ligase alpha subunit from Geobacter sulfurreducens (strain ATCC 51573 / DSM 12127 / PCA).